Reading from the N-terminus, the 355-residue chain is Protein ATP1B4 (355 aa).

The Nuclear segment spans residues 1–108 (MRRQLRSRRA…SLARTGQSLS (108 aa)). Residues 35–76 (EEEEAEEARVMVVPDLEEEEKEEEEEKEEDEKEEEESHHQDT) form a disordered region. Residues 49 to 68 (DLEEEEKEEEEEKEEDEKEE) show a composition bias toward acidic residues. Residues 109–129 (LLLVIYFFFYASLAAVITLCM) form a helical; Signal-anchor for type II membrane protein membrane-spanning segment. Topologically, residues 130–355 (YTLFLTISPY…RVIFTLNIET (226 aa)) are perinuclear space.

Belongs to the X(+)/potassium ATPases subunit beta family. Associates with a SMAD7-transcriptional complex. Interacts with SNW1 and TOR1AIP1. Does not associate with known Na,K-ATPase alpha-subunits. As to expression, expressed in skeletal muscle (at protein level). Expressed during postnatal development in skeletal muscle and heart.

The protein resides in the nucleus inner membrane. May act as a transcriptional coregulator during muscle development through its interaction with SNW1. Has lost its ancestral function as a Na,K-ATPase beta-subunit. The sequence is that of Protein ATP1B4 (ATP1B4) from Sus scrofa (Pig).